The sequence spans 81 residues: LYR motif-containing protein At3g19508 (81 aa).

This sequence belongs to the complex I LYR family. LYRM9 subfamily.

The polypeptide is LYR motif-containing protein At3g19508 (Arabidopsis thaliana (Mouse-ear cress)).